Reading from the N-terminus, the 167-residue chain is Endoribonuclease YbeY (167 aa).

Zn(2+)-binding residues include His-131, His-135, and His-141.

This sequence belongs to the endoribonuclease YbeY family. The cofactor is Zn(2+).

It is found in the cytoplasm. Single strand-specific metallo-endoribonuclease involved in late-stage 70S ribosome quality control and in maturation of the 3' terminus of the 16S rRNA. The sequence is that of Endoribonuclease YbeY from Rickettsia rickettsii (strain Iowa).